We begin with the raw amino-acid sequence, 464 residues long: Soluble pyridine nucleotide transhydrogenase (464 aa).

35-44 (EASSQVGGSC) contacts FAD.

It belongs to the class-I pyridine nucleotide-disulfide oxidoreductase family. The cofactor is FAD.

Its subcellular location is the cytoplasm. It carries out the reaction NAD(+) + NADPH = NADH + NADP(+). Its function is as follows. Conversion of NADPH, generated by peripheral catabolic pathways, to NADH, which can enter the respiratory chain for energy generation. The sequence is that of Soluble pyridine nucleotide transhydrogenase from Marinomonas sp. (strain MWYL1).